Consider the following 327-residue polypeptide: MSPPAAIYEPTVAATGLKGKVVVSETAPVEGASQTKLLDHFGGKWDEFKFAPIRESQVSRAMTRRYFEDLDKYAESDVVIVGAGSCGLSTAYVLAKARPDLKIAIVEASVSPGGGAWLGGQLFSAMVMRRPAEVFLNELGVPYEEDANPNYVVVKHASLFTSTLMSKVLSFPNVKLFNATAVEDLITRPTENGNPQIAGVVVNWTLVTLHHDDHSCMDPNTINAPVIISTTGHDGPFGAFCAKRLVSMGSVDKLGGMRGLDMNSAEDAIVKNTREVTKGLIIGGMELSEIDGFNRMGPTFGAMVLSGVKAAEEALKVFDERQRECAE.

Substrate contacts are provided by residues cysteine 86, 107–108, glycine 115, and valine 182; that span reads EA. Cysteine 216 is modified (2,3-didehydroalanine (Cys)). Substrate contacts are provided by residues aspartate 218, histidine 233, methionine 285, and 295-297; that span reads RMG.

The protein belongs to the THI4 family. Homooctamer. It depends on Fe cation as a cofactor. In terms of processing, during the catalytic reaction, a sulfide is transferred from Cys-216 to a reaction intermediate, generating a dehydroalanine residue.

The protein resides in the cytoplasm. Its subcellular location is the nucleus. The catalysed reaction is [ADP-thiazole synthase]-L-cysteine + glycine + NAD(+) = [ADP-thiazole synthase]-dehydroalanine + ADP-5-ethyl-4-methylthiazole-2-carboxylate + nicotinamide + 3 H2O + 2 H(+). Involved in biosynthesis of the thiamine precursor thiazole. Catalyzes the conversion of NAD and glycine to adenosine diphosphate 5-(2-hydroxyethyl)-4-methylthiazole-2-carboxylic acid (ADT), an adenylated thiazole intermediate. The reaction includes an iron-dependent sulfide transfer from a conserved cysteine residue of the protein to a thiazole intermediate. The enzyme can only undergo a single turnover, which suggests it is a suicide enzyme. May have additional roles in adaptation to various stress conditions and in DNA damage tolerance. In Aspergillus oryzae (strain ATCC 42149 / RIB 40) (Yellow koji mold), this protein is Thiamine thiazole synthase.